Reading from the N-terminus, the 257-residue chain is Phosphate import ATP-binding protein PstB (257 aa).

Residues 11 to 252 enclose the ABC transporter domain; that stretch reads IQVRDLNFYY…PAKKQTEDYI (242 aa). Residue 43 to 50 participates in ATP binding; it reads GPSGCGKS.

Belongs to the ABC transporter superfamily. Phosphate importer (TC 3.A.1.7) family. As to quaternary structure, the complex is composed of two ATP-binding proteins (PstB), two transmembrane proteins (PstC and PstA) and a solute-binding protein (PstS).

It is found in the cell inner membrane. The enzyme catalyses phosphate(out) + ATP + H2O = ADP + 2 phosphate(in) + H(+). Functionally, part of the ABC transporter complex PstSACB involved in phosphate import. Responsible for energy coupling to the transport system. The sequence is that of Phosphate import ATP-binding protein PstB from Salmonella paratyphi A (strain ATCC 9150 / SARB42).